A 180-amino-acid chain; its full sequence is Endoribonuclease YbeY (180 aa).

Residues histidine 136, histidine 140, and histidine 146 each contribute to the Zn(2+) site.

The protein belongs to the endoribonuclease YbeY family. The cofactor is Zn(2+).

It is found in the cytoplasm. In terms of biological role, single strand-specific metallo-endoribonuclease involved in late-stage 70S ribosome quality control and in maturation of the 3' terminus of the 16S rRNA. The protein is Endoribonuclease YbeY of Synechococcus sp. (strain CC9902).